A 104-amino-acid chain; its full sequence is NADH-quinone oxidoreductase subunit K (104 aa).

3 helical membrane passes run 4 to 24 (VPAS…LFGA), 31 to 51 (VIVL…LVAF), and 67 to 87 (LFTM…LIAL).

This sequence belongs to the complex I subunit 4L family. As to quaternary structure, NDH-1 is composed of 14 different subunits. Subunits NuoA, H, J, K, L, M, N constitute the membrane sector of the complex.

The protein resides in the cell membrane. It catalyses the reaction a quinone + NADH + 5 H(+)(in) = a quinol + NAD(+) + 4 H(+)(out). NDH-1 shuttles electrons from NADH, via FMN and iron-sulfur (Fe-S) centers, to quinones in the respiratory chain. The immediate electron acceptor for the enzyme in this species is believed to be a menaquinone. Couples the redox reaction to proton translocation (for every two electrons transferred, four hydrogen ions are translocated across the cytoplasmic membrane), and thus conserves the redox energy in a proton gradient. The polypeptide is NADH-quinone oxidoreductase subunit K (Bacillus cereus (strain AH820)).